The following is a 401-amino-acid chain: Tetracycline resistance protein, class B (401 aa).

The Cytoplasmic segment spans residues 1–6 (MNSSTK). The helical transmembrane segment at 7–30 (IALVITLLDAMGIGLIMPVLPTLL) threads the bilayer. Residues 31 to 42 (REFIASEDIANH) are Periplasmic-facing. A helical transmembrane segment spans residues 43–61 (FGVLLALYALMQVIFAPWL). The Cytoplasmic segment spans residues 62–71 (GKMSDRFGRR). The chain crosses the membrane as a helical span at residues 72 to 91 (PVLLLSLIGASLDYLLLAFS). Topologically, residues 92-98 (SALWMLY) are periplasmic. A helical transmembrane segment spans residues 99–119 (LGRLLSGITGATGAVAASVIA). The Cytoplasmic portion of the chain corresponds to 120 to 129 (DTTSASQRVK). The chain crosses the membrane as a helical span at residues 130-152 (WFGWLGASFGLGLIAGPIIGGFA). Over 153–158 (GEISPH) the chain is Periplasmic. The helical transmembrane segment at 159-178 (SPFFIAALLNIVTFLVVMFW) threads the bilayer. Over 179–211 (FRETKNTRDNTDTEVGVETQSNSVYITLFKTMP) the chain is Cytoplasmic. Residues 212–232 (ILLIIYFSAQLIGQIPATVWV) form a helical membrane-spanning segment. The Periplasmic segment spans residues 233 to 243 (LFTENRFGWNS). The helical transmembrane segment at 244–265 (MMVGFSLAGLGLLHSVFQAFVA) threads the bilayer. Topologically, residues 266 to 275 (GRIATKWGEK) are cytoplasmic. The helical transmembrane segment at 276–295 (TAVLLGFIADSSAFAFLAFI) threads the bilayer. Topologically, residues 296-298 (SEG) are periplasmic. A helical transmembrane segment spans residues 299–322 (WLVFPVLILLAGGGIALPALQGVM). Residues 323–332 (SIQTKSHQQG) are Cytoplasmic-facing. The chain crosses the membrane as a helical span at residues 333 to 356 (ALQGLLVSLTNATGVIGPLLFAVI). Over 357-365 (YNHSLPIWD) the chain is Periplasmic. Residues 366–387 (GWIWIIGLAFYCIIILLSMTFM) traverse the membrane as a helical segment. At 388-401 (LTPQAQGSKQETSA) the chain is on the cytoplasmic side.

This sequence belongs to the major facilitator superfamily. TCR/Tet family.

It localises to the cell inner membrane. Functionally, resistance to tetracycline by an active tetracycline efflux. This is an energy-dependent process that decreases the accumulation of the antibiotic in whole cells. This protein functions as a metal-tetracycline/H(+) antiporter. This is Tetracycline resistance protein, class B (tetA) from Escherichia coli.